A 208-amino-acid chain; its full sequence is Protein-L-isoaspartate O-methyltransferase (208 aa).

Residue S59 is part of the active site.

This sequence belongs to the methyltransferase superfamily. L-isoaspartyl/D-aspartyl protein methyltransferase family.

It localises to the cytoplasm. It catalyses the reaction [protein]-L-isoaspartate + S-adenosyl-L-methionine = [protein]-L-isoaspartate alpha-methyl ester + S-adenosyl-L-homocysteine. Functionally, catalyzes the methyl esterification of L-isoaspartyl residues in peptides and proteins that result from spontaneous decomposition of normal L-aspartyl and L-asparaginyl residues. It plays a role in the repair and/or degradation of damaged proteins. This Pectobacterium atrosepticum (strain SCRI 1043 / ATCC BAA-672) (Erwinia carotovora subsp. atroseptica) protein is Protein-L-isoaspartate O-methyltransferase.